A 292-amino-acid chain; its full sequence is Homoserine kinase (292 aa).

Residue 81 to 91 (RPKSGLGSSGA) participates in ATP binding.

Belongs to the GHMP kinase family. Homoserine kinase subfamily.

The protein localises to the cytoplasm. It catalyses the reaction L-homoserine + ATP = O-phospho-L-homoserine + ADP + H(+). The protein operates within amino-acid biosynthesis; L-threonine biosynthesis; L-threonine from L-aspartate: step 4/5. Functionally, catalyzes the ATP-dependent phosphorylation of L-homoserine to L-homoserine phosphate. The chain is Homoserine kinase from Pyrococcus furiosus (strain ATCC 43587 / DSM 3638 / JCM 8422 / Vc1).